The primary structure comprises 728 residues: Protein Hook homolog 1 (728 aa).

Met1 bears the N-acetylmethionine mark. Residues 1–555 (MEDPQPLPQS…LKQKLEAHME (555 aa)) form a sufficient for interaction with microtubules region. Positions 12–128 (LPLCDSLIIW…RLLQLILGCA (117 aa)) constitute a Calponin-homology (CH) domain. Coiled-coil stretches lie at residues 168 to 443 (PASD…LNQA) and 477 to 658 (LRLQ…AKLR). Position 235 is a phosphoserine (Ser235). Residues 481 to 510 (QEGTENERIEQLQEQLEQKHRKMNELETEQ) form a disordered region. Positions 657–728 (LRDYEEKLIV…SVKVPAAASD (72 aa)) are sufficient for interaction with AKTIP and VPS18. 2 positions are modified to phosphoserine: Ser719 and Ser727.

This sequence belongs to the hook family. As to quaternary structure, self-associates. Component of the FTS/Hook/FHIP complex (FHF complex), composed of AKTIP/FTS, FHIP1B, and one or more members of the Hook family of proteins HOOK1, HOOK2, and HOOK3. Interacts directly with AKTIP/FTS, HOOK2 and HOOK3. Associates with several subunits of the homotypic vesicular sorting complex (the HOPS complex) including VPS16, VPS18, VPS39 and VPS41; these interactions may be indirect. Interacts with CCDC181. Interacts (via coiled-coil region) with RIMBP3 (via C-terminus). Interacts with LRGUK (via guanylate kinase-like domain). Interacts with microtubules. May interacts with CLN3. Interacts with AP4M1; the interaction is direct, mediates the interaction between FTS-Hook-FHIP (FHF) complex and AP-4 and the perinuclear distribution of AP-4. As to expression, mainly expressed in testis.

It localises to the cytoplasm. The protein resides in the cytoskeleton. Component of the FTS/Hook/FHIP complex (FHF complex). The FHF complex may function to promote vesicle trafficking and/or fusion via the homotypic vesicular protein sorting complex (the HOPS complex). FHF complex promotes the distribution of AP-4 complex to the perinuclear area of the cell. Required for spermatid differentiation. Probably involved in the positioning of the microtubules of the manchette and the flagellum in relation to the membrane skeleton. The chain is Protein Hook homolog 1 (Hook1) from Mus musculus (Mouse).